Here is a 127-residue protein sequence, read N- to C-terminus: Multiple antibiotic resistance protein MarA (127 aa).

In terms of domain architecture, HTH araC/xylS-type spans histidine 12–threonine 110. 2 consecutive DNA-binding regions (H-T-H motif) follow at residues glutamate 29–threonine 50 and isoleucine 77–phenylalanine 100.

In terms of assembly, monomer.

In terms of biological role, may be a transcriptional activator of genes involved in the multiple antibiotic resistance (Mar) phenotype. It can also activate genes such as sodA, zwf and micF. The protein is Multiple antibiotic resistance protein MarA (marA) of Escherichia coli (strain K12).